The chain runs to 78 residues: Small ribosomal subunit protein bS16c (78 aa).

Belongs to the bacterial ribosomal protein bS16 family.

It is found in the plastid. The protein localises to the chloroplast. The polypeptide is Small ribosomal subunit protein bS16c (Amborella trichopoda).